The following is a 212-amino-acid chain: Ribosomal RNA large subunit methyltransferase E (212 aa).

The segment covering 1 to 10 has biased composition (basic residues); the sequence is MATCRRRRRG. Residues 1-24 are disordered; sequence MATCRRRRRGCNSQARRSRHESDP. S-adenosyl-L-methionine is bound by residues Gly66, Trp68, Asp86, Asp102, and Asp127. The active-site Proton acceptor is Lys167.

This sequence belongs to the class I-like SAM-binding methyltransferase superfamily. RNA methyltransferase RlmE family.

It is found in the cytoplasm. The catalysed reaction is uridine(2552) in 23S rRNA + S-adenosyl-L-methionine = 2'-O-methyluridine(2552) in 23S rRNA + S-adenosyl-L-homocysteine + H(+). Its function is as follows. Specifically methylates the uridine in position 2552 of 23S rRNA at the 2'-O position of the ribose in the fully assembled 50S ribosomal subunit. This Halorhodospira halophila (strain DSM 244 / SL1) (Ectothiorhodospira halophila (strain DSM 244 / SL1)) protein is Ribosomal RNA large subunit methyltransferase E.